The chain runs to 557 residues: Glucose-6-phosphate isomerase (557 aa).

Glutamate 359 acts as the Proton donor in catalysis. Residues histidine 390 and lysine 518 contribute to the active site.

It belongs to the GPI family.

It is found in the cytoplasm. It carries out the reaction alpha-D-glucose 6-phosphate = beta-D-fructose 6-phosphate. The protein operates within carbohydrate biosynthesis; gluconeogenesis. It functions in the pathway carbohydrate degradation; glycolysis; D-glyceraldehyde 3-phosphate and glycerone phosphate from D-glucose: step 2/4. Its function is as follows. Catalyzes the reversible isomerization of glucose-6-phosphate to fructose-6-phosphate. The chain is Glucose-6-phosphate isomerase from Hahella chejuensis (strain KCTC 2396).